A 478-amino-acid chain; its full sequence is Sulfate adenylyltransferase subunit 1 (478 aa).

The 217-residue stretch at 28-244 (KTMLRFLTCG…LESVDVVNAR (217 aa)) folds into the tr-type G domain. The segment at 37-44 (GSVDDGKS) is G1. 37-44 (GSVDDGKS) is a GTP binding site. The segment at 95–99 (GITID) is G2. Residues 116–119 (DTPG) are G3. Residues 116 to 120 (DTPGH) and 171 to 174 (NKMD) contribute to the GTP site. The G4 stretch occupies residues 171–174 (NKMD). The G5 stretch occupies residues 209–211 (SAL).

The protein belongs to the TRAFAC class translation factor GTPase superfamily. Classic translation factor GTPase family. CysN/NodQ subfamily. Heterodimer composed of CysD, the smaller subunit, and CysN.

It carries out the reaction sulfate + ATP + H(+) = adenosine 5'-phosphosulfate + diphosphate. It participates in sulfur metabolism; hydrogen sulfide biosynthesis; sulfite from sulfate: step 1/3. With CysD forms the ATP sulfurylase (ATPS) that catalyzes the adenylation of sulfate producing adenosine 5'-phosphosulfate (APS) and diphosphate, the first enzymatic step in sulfur assimilation pathway. APS synthesis involves the formation of a high-energy phosphoric-sulfuric acid anhydride bond driven by GTP hydrolysis by CysN coupled to ATP hydrolysis by CysD. The protein is Sulfate adenylyltransferase subunit 1 of Yersinia pseudotuberculosis serotype O:1b (strain IP 31758).